A 96-amino-acid chain; its full sequence is Co-chaperonin GroES (96 aa).

The protein belongs to the GroES chaperonin family. As to quaternary structure, heptamer of 7 subunits arranged in a ring. Interacts with the chaperonin GroEL.

It is found in the cytoplasm. In terms of biological role, together with the chaperonin GroEL, plays an essential role in assisting protein folding. The GroEL-GroES system forms a nano-cage that allows encapsulation of the non-native substrate proteins and provides a physical environment optimized to promote and accelerate protein folding. GroES binds to the apical surface of the GroEL ring, thereby capping the opening of the GroEL channel. The chain is Co-chaperonin GroES from Aliivibrio fischeri (strain ATCC 700601 / ES114) (Vibrio fischeri).